The chain runs to 317 residues: Olfactory receptor 5AP2 (317 aa).

Topologically, residues Met1–Gly32 are extracellular. Asn12 is a glycosylation site (N-linked (GlcNAc...) asparagine). A helical transmembrane segment spans residues Val33 to Met53. At Ala54–Ser61 the chain is on the cytoplasmic side. Residues Leu62–Ser82 form a helical membrane-spanning segment. The Extracellular segment spans residues Ser83 to Thr106. A disulfide bridge connects residues Cys104 and Cys196. A helical membrane pass occupies residues Gln107–Tyr127. The Cytoplasmic segment spans residues Asp128–Pro140. A helical membrane pass occupies residues Val141–Gly161. Residues Asn162–Gly203 are Extracellular-facing. Residues Ile204–Ser224 form a helical membrane-spanning segment. Residues Tyr225–Ala244 are Cytoplasmic-facing. The chain crosses the membrane as a helical span at residues Phe245–Met265. Over Tyr266–Asp278 the chain is Extracellular. Residues Lys279 to Leu299 form a helical membrane-spanning segment. Residues Lys300–Val317 lie on the Cytoplasmic side of the membrane.

Belongs to the G-protein coupled receptor 1 family.

The protein resides in the cell membrane. Odorant receptor. In Mus musculus (Mouse), this protein is Olfactory receptor 5AP2.